The sequence spans 304 residues: Serine protease 30 (304 aa).

A signal peptide spans 1–21 (MESWARCIFLLLLQILTGGRG). Residues 22 to 30 (DILHSGAGK) constitute a propeptide, activation peptide. The Peptidase S1 domain occupies 31 to 271 (IVGGQDAPEG…YVDWIQRTLA (241 aa)). Residues C57 and C73 are joined by a disulfide bond. H72 functions as the Charge relay system in the catalytic mechanism. N79 carries N-linked (GlcNAc...) asparagine glycosylation. D122 (charge relay system) is an active-site residue. Cystine bridges form between C155–C229, C185–C208, and C219–C247. S223 acts as the Charge relay system in catalysis. 2 N-linked (GlcNAc...) asparagine glycosylation sites follow: N232 and N273. Residue S275 is the site of GPI-anchor amidated serine attachment. Positions 276 to 304 (DAYGCRSRASGAYPALLLVLLAFALPESL) are cleaved as a propeptide — removed in mature form.

It belongs to the peptidase S1 family. In terms of tissue distribution, expressed predominantly in kidney, small intestine and stomach and moderately in thymus, lung, spleen, testis and skin. In the kidney, expressed mainly in collecting duct of renal medulla and cortex.

The protein localises to the cell membrane. Inhibited by aprotinin, leupeptin, benzamidine and soybean trypsin inhibitor. Partially inhibited by PMSF and DFP. Its function is as follows. Selectively cleaves synthetic peptide substrates of trypsin. Activates the epithelial sodium channel ENaC. This Rattus norvegicus (Rat) protein is Serine protease 30 (Prss30).